The primary structure comprises 467 residues: Ribulose bisphosphate carboxylase large chain (467 aa).

A propeptide spanning residues 1–2 (MS) is cleaved from the precursor. Residue Pro3 is modified to N-acetylproline. An N6,N6,N6-trimethyllysine modification is found at Lys14. The substrate site is built by Asn123 and Thr173. The Proton acceptor role is filled by Lys175. Residue Lys177 coordinates substrate. 3 residues coordinate Mg(2+): Lys201, Asp203, and Glu204. Lys201 is modified (N6-carboxylysine). His294 acts as the Proton acceptor in catalysis. Residues Arg295, His327, and Ser379 each coordinate substrate.

This sequence belongs to the RuBisCO large chain family. Type I subfamily. As to quaternary structure, heterohexadecamer of 8 large chains and 8 small chains; disulfide-linked. The disulfide link is formed within the large subunit homodimers. The cofactor is Mg(2+). In terms of processing, the disulfide bond which can form in the large chain dimeric partners within the hexadecamer appears to be associated with oxidative stress and protein turnover.

The protein resides in the plastid. The protein localises to the chloroplast. The catalysed reaction is 2 (2R)-3-phosphoglycerate + 2 H(+) = D-ribulose 1,5-bisphosphate + CO2 + H2O. The enzyme catalyses D-ribulose 1,5-bisphosphate + O2 = 2-phosphoglycolate + (2R)-3-phosphoglycerate + 2 H(+). Its function is as follows. RuBisCO catalyzes two reactions: the carboxylation of D-ribulose 1,5-bisphosphate, the primary event in carbon dioxide fixation, as well as the oxidative fragmentation of the pentose substrate in the photorespiration process. Both reactions occur simultaneously and in competition at the same active site. This Calamus usitatus (Palm tree) protein is Ribulose bisphosphate carboxylase large chain.